Here is a 586-residue protein sequence, read N- to C-terminus: Phosphomethylpyrimidine synthase (586 aa).

The interval 1-59 (MKQSVSAEQIELKSSLPGSKKVYVDGPREGMKVPMREIEQSETNGVPNPPIRVYDTSGP) is disordered. Basic and acidic residues predominate over residues 22–39 (VYVDGPREGMKVPMREIE). Substrate is bound by residues N193, M222, Y251, H287, 307–309 (SRG), 348–351 (DGLR), and E387. H391 provides a ligand contact to Zn(2+). Residue Y414 coordinates substrate. Zn(2+) is bound at residue H455. Residues C535, C538, and C543 each contribute to the [4Fe-4S] cluster site.

It belongs to the ThiC family. It depends on [4Fe-4S] cluster as a cofactor.

The enzyme catalyses 5-amino-1-(5-phospho-beta-D-ribosyl)imidazole + S-adenosyl-L-methionine = 4-amino-2-methyl-5-(phosphooxymethyl)pyrimidine + CO + 5'-deoxyadenosine + formate + L-methionine + 3 H(+). The protein operates within cofactor biosynthesis; thiamine diphosphate biosynthesis. In terms of biological role, catalyzes the synthesis of the hydroxymethylpyrimidine phosphate (HMP-P) moiety of thiamine from aminoimidazole ribotide (AIR) in a radical S-adenosyl-L-methionine (SAM)-dependent reaction. The sequence is that of Phosphomethylpyrimidine synthase from Bacillus cereus (strain ATCC 14579 / DSM 31 / CCUG 7414 / JCM 2152 / NBRC 15305 / NCIMB 9373 / NCTC 2599 / NRRL B-3711).